The primary structure comprises 198 residues: Type 1 fimbriae regulatory protein FimE (198 aa).

Residues Ser-2 to Glu-184 enclose the Tyr recombinase domain. Active-site residues include Arg-41, Lys-66, His-136, Arg-139, and His-162. Tyr-171 serves as the catalytic O-(3'-phospho-DNA)-tyrosine intermediate.

Belongs to the 'phage' integrase family.

FimE is one of the 2 regulatory proteins which control the phase variation of type 1 fimbriae in E.coli. These proteins mediate the periodic inversion of a 300bp DNA segment that harbors the promoter for the fimbrial structural gene, fimA. FimE switches fimA off. The chain is Type 1 fimbriae regulatory protein FimE (fimE) from Escherichia coli O6:H1 (strain CFT073 / ATCC 700928 / UPEC).